The following is a 310-amino-acid chain: Vomeronasal type-1 receptor 40 (310 aa).

Residues 1–20 (MNKANMLRTDKDMQIILFSE) lie on the Extracellular side of the membrane. Residues 21–41 (VSVGISANSILFIAHVCMILG) form a helical membrane-spanning segment. Residues 42 to 50 (ENRPKPIDL) are Cytoplasmic-facing. A helical membrane pass occupies residues 51–71 (YIAFLSLTQLMLLITMGLIAV). Residues 72–93 (DMFLSQGIWDSTTCQSLIYLHR) are Extracellular-facing. C85 and C172 form a disulfide bridge. The helical transmembrane segment at 94-114 (LLRGLSLCATCLLNILWTITL) threads the bilayer. The Cytoplasmic portion of the chain corresponds to 115-134 (SSRSFCSTKFKHKSPHHISG). A helical membrane pass occupies residues 135–155 (AFIFFCVLYMSFSSHLFISII). The Extracellular portion of the chain corresponds to 156 to 190 (ATHNLTSENFIYVTQSCSLLPLSYSRTSMFSAPMA). A glycan (N-linked (GlcNAc...) asparagine) is linked at N159. A helical membrane pass occupies residues 191-211 (IREAFLVSLMALSSGYMVALL). The Cytoplasmic segment spans residues 212–238 (WRHKKQAQHLHSTSLSSKASPEQRATR). The chain crosses the membrane as a helical span at residues 239–259 (TILLLMSFFVVLYILENAVFY). The Extracellular portion of the chain corresponds to 260 to 268 (SRIKFKDGS). The chain crosses the membrane as a helical span at residues 269 to 289 (ILYCVQIILCHSYATVNPFVF). Residues 290–310 (ICTEKHIIKFWESKCGRIVNI) lie on the Cytoplasmic side of the membrane.

It belongs to the G-protein coupled receptor 1 family.

The protein resides in the cell membrane. Its function is as follows. Putative pheromone receptor implicated in the regulation of social and reproductive behavior. The chain is Vomeronasal type-1 receptor 40 (Vmn1r40) from Mus musculus (Mouse).